The following is a 697-amino-acid chain: Elongation factor G (697 aa).

In terms of domain architecture, tr-type G spans 6-281 (ENIRNIGICA…AVVDYLPSPI (276 aa)). Residues 15–22 (AHIDAGKT), 79–83 (DTPGH), and 133–136 (NKMD) contribute to the GTP site.

This sequence belongs to the TRAFAC class translation factor GTPase superfamily. Classic translation factor GTPase family. EF-G/EF-2 subfamily.

Its subcellular location is the cytoplasm. Catalyzes the GTP-dependent ribosomal translocation step during translation elongation. During this step, the ribosome changes from the pre-translocational (PRE) to the post-translocational (POST) state as the newly formed A-site-bound peptidyl-tRNA and P-site-bound deacylated tRNA move to the P and E sites, respectively. Catalyzes the coordinated movement of the two tRNA molecules, the mRNA and conformational changes in the ribosome. The chain is Elongation factor G from Rickettsia bellii (strain OSU 85-389).